Here is a 269-residue protein sequence, read N- to C-terminus: Eukaryotic translation initiation factor 3 subunit G-1 (269 aa).

Residues 188–266 (AAIRISNLSE…LILSVEWSKP (79 aa)) enclose the RRM domain.

Belongs to the eIF-3 subunit G family. As to quaternary structure, component of the eukaryotic translation initiation factor 3 (eIF-3) complex. The eIF-3 complex interacts with pix.

The protein localises to the cytoplasm. RNA-binding component of the eukaryotic translation initiation factor 3 (eIF-3) complex, which is involved in protein synthesis of a specialized repertoire of mRNAs and, together with other initiation factors, stimulates binding of mRNA and methionyl-tRNAi to the 40S ribosome. The eIF-3 complex specifically targets and initiates translation of a subset of mRNAs involved in cell proliferation. This subunit can bind 18S rRNA. The polypeptide is Eukaryotic translation initiation factor 3 subunit G-1 (Drosophila grimshawi (Hawaiian fruit fly)).